The primary structure comprises 268 residues: Tryptophan synthase alpha chain (268 aa).

Active-site proton acceptor residues include Glu-49 and Asp-60.

The protein belongs to the TrpA family. In terms of assembly, tetramer of two alpha and two beta chains.

The enzyme catalyses (1S,2R)-1-C-(indol-3-yl)glycerol 3-phosphate + L-serine = D-glyceraldehyde 3-phosphate + L-tryptophan + H2O. It participates in amino-acid biosynthesis; L-tryptophan biosynthesis; L-tryptophan from chorismate: step 5/5. Functionally, the alpha subunit is responsible for the aldol cleavage of indoleglycerol phosphate to indole and glyceraldehyde 3-phosphate. This chain is Tryptophan synthase alpha chain, found in Aeromonas salmonicida (strain A449).